Here is a 500-residue protein sequence, read N- to C-terminus: NAD(P)H-quinone oxidoreductase chain 4, chloroplastic (500 aa).

14 helical membrane passes run 4–24, 37–57, 87–107, 113–130, 134–154, 167–187, 211–231, 242–262, 272–292, 305–325, 330–350, 386–406, 416–436, and 462–482; these read FPWLTIIVVFPISAGLSIFFL, ICICLLELLLMTYVFCYHFQL, IGPILLTGFITTLATLAAWPV, LFHFLMLAMYSGQIGLFS, LLLFFLMWELELIPVYLLLSM, FILYTAGGSVFLLMGVLGMGL, ILFYFGFLIAYAVKLPIIPLH, HYSTCMLLAGILLKMGAYGLV, AHSIFSPWLVLAGTLQIIYAA, IAYSSVSHMGFTIIGIGSITD, GAILQLLSHGFLGAALFFLAG, LALPGMSGFVAEAVVFFGIIT, ILITFVMAIGMILTPIYLLSM, and LFVSICIFLPVIGIGIYPDFV.

It belongs to the complex I subunit 4 family.

It localises to the plastid. The protein resides in the chloroplast thylakoid membrane. The enzyme catalyses a plastoquinone + NADH + (n+1) H(+)(in) = a plastoquinol + NAD(+) + n H(+)(out). It catalyses the reaction a plastoquinone + NADPH + (n+1) H(+)(in) = a plastoquinol + NADP(+) + n H(+)(out). This is NAD(P)H-quinone oxidoreductase chain 4, chloroplastic from Acorus calamus var. americanus (American sweet flag).